Consider the following 623-residue polypeptide: Aspartate--tRNA(Asp/Asn) ligase (623 aa).

E175 is an L-aspartate binding site. The tract at residues 199-202 (QQFK) is aspartate. R221 and H455 together coordinate L-aspartate. Residue 221-223 (RDE) participates in ATP binding. Position 517 (E517) interacts with ATP. R524 contacts L-aspartate. 569 to 572 (GVDR) contributes to the ATP binding site.

Belongs to the class-II aminoacyl-tRNA synthetase family. Type 1 subfamily. Homodimer.

The protein localises to the cytoplasm. The enzyme catalyses tRNA(Asx) + L-aspartate + ATP = L-aspartyl-tRNA(Asx) + AMP + diphosphate. Its function is as follows. Aspartyl-tRNA synthetase with relaxed tRNA specificity since it is able to aspartylate not only its cognate tRNA(Asp) but also tRNA(Asn). Reaction proceeds in two steps: L-aspartate is first activated by ATP to form Asp-AMP and then transferred to the acceptor end of tRNA(Asp/Asn). The protein is Aspartate--tRNA(Asp/Asn) ligase of Methylocella silvestris (strain DSM 15510 / CIP 108128 / LMG 27833 / NCIMB 13906 / BL2).